The following is a 442-amino-acid chain: D-serine dehydratase (442 aa).

At lysine 118 the chain carries N6-(pyridoxal phosphate)lysine.

This sequence belongs to the serine/threonine dehydratase family. DsdA subfamily. Monomer. Pyridoxal 5'-phosphate is required as a cofactor.

It carries out the reaction D-serine = pyruvate + NH4(+). This is D-serine dehydratase from Escherichia coli (strain K12 / MC4100 / BW2952).